The following is a 349-amino-acid chain: Transcription repressor OFP5 (349 aa).

3 disordered regions span residues 1 to 20, 29 to 94, and 143 to 183; these read MMRW…GLSR, KLSG…KESN, and KQRC…GYSR. The span at 10-20 shows a compositional bias: low complexity; sequence VSSSSSSGLSR. The span at 37–48 shows a compositional bias: basic and acidic residues; that stretch reads KPAKEKKQDEKA. A compositionally biased stretch (polar residues) spans 49–62; sequence SQNISVKTSLSSTT. Basic and acidic residues-rich tracts occupy residues 63–94 and 143–167; these read RRSD…KESN and KQRC…DAGV. The 60-residue stretch at 286 to 345 folds into the OVATE domain; the sequence is VVKCSSDPQKDFRDSMIEMIMENGINHPEELKELLVCYLRLNTDEYHDMIISVFQQVHND.

In terms of assembly, interacts with BLH1, BLH2, BLH3, BLH4, BLH6 and BLH10. As to expression, expressed in roots, rosette and cauline leaves, and flower buds.

Its subcellular location is the nucleus. Its function is as follows. Transcriptional repressor that regulates multiple aspects of plant growth and development through the regulation of BEL1-LIKE (BLH) and KNOX TALE (KNAT) homeodomain transcription factors. Required for embryo development. The chain is Transcription repressor OFP5 (OFP5) from Arabidopsis thaliana (Mouse-ear cress).